Consider the following 133-residue polypeptide: uncharacterized protein (133 aa).

A helical membrane pass occupies residues Y11–T31.

It is found in the membrane. This is an uncharacterized protein from Borreliella burgdorferi (strain ATCC 35210 / DSM 4680 / CIP 102532 / B31) (Borrelia burgdorferi).